The sequence spans 1331 residues: Lysine-specific demethylase 3A-A (1331 aa).

Disordered stretches follow at residues 243–280 (LNDKSRKPRAPKRKSQDTESEDQTELKQTRNEEVPSKD), 358–381 (TPPQANSPPSFGAATPQGKGTQNL), and 497–532 (KVVKKPENNHTSVRAIKPQEPPYPKSPNKNDGVTYP). A compositionally biased stretch (basic and acidic residues) spans 266 to 280 (TELKQTRNEEVPSKD). The C6-type zinc finger occupies 683-708 (CDACDTTIFNLHWVCPKCGFGVCVDC). The LXXLL motif motif lies at 894–898 (LRNLL). The JmjC domain maps to 1086–1291 (RREGKLNLAA…HCFWLTQEFR (206 aa)). Residues H1130, D1132, and H1259 each contribute to the Fe cation site.

It belongs to the JHDM2 histone demethylase family. Fe(2+) serves as cofactor.

It is found in the cytoplasm. The protein resides in the nucleus. The catalysed reaction is N(6),N(6)-dimethyl-L-lysyl(9)-[histone H3] + 2 2-oxoglutarate + 2 O2 = L-lysyl(9)-[histone H3] + 2 formaldehyde + 2 succinate + 2 CO2. Functionally, histone demethylase that specifically demethylates 'Lys-9' of histone H3, thereby playing a central role in histone code. Preferentially demethylates mono- and dimethylated H3 'Lys-9' residue, with a preference for dimethylated residue, while it has weak or no activity on trimethylated H3 'Lys-9'. Demethylation of Lys residue generates formaldehyde and succinate. The sequence is that of Lysine-specific demethylase 3A-A (kdm3a-a) from Xenopus laevis (African clawed frog).